The sequence spans 390 residues: tRNA(Met) cytidine acetate ligase (390 aa).

Residues 7–20 (VVEY…HKLH), Gly101, Asn162, and Arg187 each bind ATP.

It belongs to the TmcAL family.

It is found in the cytoplasm. It catalyses the reaction cytidine(34) in elongator tRNA(Met) + acetate + ATP = N(4)-acetylcytidine(34) in elongator tRNA(Met) + AMP + diphosphate. In terms of biological role, catalyzes the formation of N(4)-acetylcytidine (ac(4)C) at the wobble position of elongator tRNA(Met), using acetate and ATP as substrates. First activates an acetate ion to form acetyladenylate (Ac-AMP) and then transfers the acetyl group to tRNA to form ac(4)C34. This chain is tRNA(Met) cytidine acetate ligase, found in Listeria monocytogenes serotype 4b (strain CLIP80459).